A 663-amino-acid polypeptide reads, in one-letter code: Rap1 GTPase-activating protein 1 (663 aa).

The GoLoco domain maps to 1–17; that stretch reads MIEKMQGSRMDEQRCSF. The segment at 1–23 is disordered; sequence MIEKMQGSRMDEQRCSFPPPLKT. Phe-17 is modified (phosphoserine). The Rap-GAP domain maps to 181–397; it reads IVTFDEHVIS…RTRAALLETL (217 aa). Ser-441 bears the Phosphoserine mark. Disordered regions lie at residues 442-604 and 616-645; these read MDAM…PHKR and SVST…PACP. A compositionally biased stretch (polar residues) spans 450-465; that stretch reads KKPNTVSTSHSGSFAP. Phosphoserine is present on residues Ser-484, Ser-499, Ser-515, Ser-541, and Ser-542. Positions 535-549 are enriched in polar residues; it reads ENSSTQSSPEMPTTK. Over residues 567-579 the composition is skewed to low complexity; it reads RSSSSASSFASVV. The segment covering 580-591 has biased composition (acidic residues); it reads EETEGVDGEDTG. The span at 616–630 shows a compositional bias: low complexity; that stretch reads SVSTTSGGSSPGPSR.

As to quaternary structure, homodimer and heterodimer with RAP1B. Significant expression seen in the brain, kidney and pancreas. Abundant in the cerebral cortex and expressed at much lower levels in the spinal cord. Not detected in the lymphoid tissues.

Its subcellular location is the golgi apparatus membrane. Functionally, GTPase activator for the nuclear Ras-related regulatory protein RAP-1A (KREV-1), converting it to the putatively inactive GDP-bound state. The polypeptide is Rap1 GTPase-activating protein 1 (RAP1GAP) (Homo sapiens (Human)).